A 339-amino-acid chain; its full sequence is DNA-directed RNA polymerase subunit alpha (339 aa).

Positions 1-235 are alpha N-terminal domain (alpha-NTD); sequence MVIQKNWQEL…DQLQVFVNFE (235 aa). The alpha C-terminal domain (alpha-CTD) stretch occupies residues 251 to 339; sequence FNPALLKKVD…DLAKRFEEHY (89 aa).

It belongs to the RNA polymerase alpha chain family. In terms of assembly, homodimer. The RNAP catalytic core consists of 2 alpha, 1 beta, 1 beta' and 1 omega subunit. When a sigma factor is associated with the core the holoenzyme is formed, which can initiate transcription.

The enzyme catalyses RNA(n) + a ribonucleoside 5'-triphosphate = RNA(n+1) + diphosphate. In terms of biological role, DNA-dependent RNA polymerase catalyzes the transcription of DNA into RNA using the four ribonucleoside triphosphates as substrates. In Methylorubrum extorquens (strain CM4 / NCIMB 13688) (Methylobacterium extorquens), this protein is DNA-directed RNA polymerase subunit alpha.